The following is a 334-amino-acid chain: Dihydroorotate dehydrogenase (quinone) (334 aa).

Residues Ala59 to Lys63 and Thr83 contribute to the FMN site. Lys63 lines the substrate pocket. Asn108–Phe112 is a binding site for substrate. Residues Asn136 and Asn169 each contribute to the FMN site. Asn169 provides a ligand contact to substrate. Ser172 serves as the catalytic Nucleophile. Asn174 is a substrate binding site. Positions 214 and 242 each coordinate FMN. Position 243 to 244 (Asn243 to Thr244) interacts with substrate. FMN contacts are provided by residues Gly265, Gly294, and Tyr315 to Ser316.

This sequence belongs to the dihydroorotate dehydrogenase family. Type 2 subfamily. In terms of assembly, monomer. The cofactor is FMN.

Its subcellular location is the cell membrane. The catalysed reaction is (S)-dihydroorotate + a quinone = orotate + a quinol. It participates in pyrimidine metabolism; UMP biosynthesis via de novo pathway; orotate from (S)-dihydroorotate (quinone route): step 1/1. Its function is as follows. Catalyzes the conversion of dihydroorotate to orotate with quinone as electron acceptor. In Acinetobacter baumannii (strain AB0057), this protein is Dihydroorotate dehydrogenase (quinone).